The chain runs to 373 residues: Dual-specificity RNA methyltransferase RlmN (373 aa).

The Proton acceptor role is filled by glutamate 94. In terms of domain architecture, Radical SAM core spans 100 to 339 (EDDRATLCVS…VIVRKTRGDD (240 aa)). The cysteines at positions 107 and 344 are disulfide-linked. [4Fe-4S] cluster is bound by residues cysteine 114, cysteine 118, and cysteine 121. S-adenosyl-L-methionine is bound by residues 168–169 (GE), serine 200, 222–224 (SIH), and asparagine 301. Cysteine 344 acts as the S-methylcysteine intermediate in catalysis.

The protein belongs to the radical SAM superfamily. RlmN family. [4Fe-4S] cluster serves as cofactor.

It is found in the cytoplasm. It catalyses the reaction adenosine(2503) in 23S rRNA + 2 reduced [2Fe-2S]-[ferredoxin] + 2 S-adenosyl-L-methionine = 2-methyladenosine(2503) in 23S rRNA + 5'-deoxyadenosine + L-methionine + 2 oxidized [2Fe-2S]-[ferredoxin] + S-adenosyl-L-homocysteine. The catalysed reaction is adenosine(37) in tRNA + 2 reduced [2Fe-2S]-[ferredoxin] + 2 S-adenosyl-L-methionine = 2-methyladenosine(37) in tRNA + 5'-deoxyadenosine + L-methionine + 2 oxidized [2Fe-2S]-[ferredoxin] + S-adenosyl-L-homocysteine. Functionally, specifically methylates position 2 of adenine 2503 in 23S rRNA and position 2 of adenine 37 in tRNAs. m2A2503 modification seems to play a crucial role in the proofreading step occurring at the peptidyl transferase center and thus would serve to optimize ribosomal fidelity. This Shewanella baltica (strain OS155 / ATCC BAA-1091) protein is Dual-specificity RNA methyltransferase RlmN.